A 200-amino-acid polypeptide reads, in one-letter code: 3-isopropylmalate dehydratase small subunit (200 aa).

Belongs to the LeuD family. LeuD type 1 subfamily. Heterodimer of LeuC and LeuD.

The catalysed reaction is (2R,3S)-3-isopropylmalate = (2S)-2-isopropylmalate. Its pathway is amino-acid biosynthesis; L-leucine biosynthesis; L-leucine from 3-methyl-2-oxobutanoate: step 2/4. Catalyzes the isomerization between 2-isopropylmalate and 3-isopropylmalate, via the formation of 2-isopropylmaleate. The polypeptide is 3-isopropylmalate dehydratase small subunit (Vibrio campbellii (strain ATCC BAA-1116)).